Reading from the N-terminus, the 323-residue chain is Beta-ketoacyl-[acyl-carrier-protein] synthase III (323 aa).

Active-site residues include Cys113 and His250. The tract at residues 251 to 255 (QANKR) is ACP-binding. Asn280 is an active-site residue.

This sequence belongs to the thiolase-like superfamily. FabH family. Homodimer.

The protein localises to the cytoplasm. It carries out the reaction malonyl-[ACP] + acetyl-CoA + H(+) = 3-oxobutanoyl-[ACP] + CO2 + CoA. The protein operates within lipid metabolism; fatty acid biosynthesis. Catalyzes the condensation reaction of fatty acid synthesis by the addition to an acyl acceptor of two carbons from malonyl-ACP. Catalyzes the first condensation reaction which initiates fatty acid synthesis and may therefore play a role in governing the total rate of fatty acid production. Possesses both acetoacetyl-ACP synthase and acetyl transacylase activities. Its substrate specificity determines the biosynthesis of branched-chain and/or straight-chain of fatty acids. The polypeptide is Beta-ketoacyl-[acyl-carrier-protein] synthase III (Brucella anthropi (strain ATCC 49188 / DSM 6882 / CCUG 24695 / JCM 21032 / LMG 3331 / NBRC 15819 / NCTC 12168 / Alc 37) (Ochrobactrum anthropi)).